The following is a 270-amino-acid chain: 3-methyl-2-oxobutanoate hydroxymethyltransferase (270 aa).

Residues Asp-41 and Asp-80 each coordinate Mg(2+). 3-methyl-2-oxobutanoate contacts are provided by residues Asp-41–Ser-42, Asp-80, and Lys-109. Glu-111 is a Mg(2+) binding site. Glu-178 (proton acceptor) is an active-site residue.

This sequence belongs to the PanB family. As to quaternary structure, homodecamer; pentamer of dimers. Mg(2+) is required as a cofactor.

It is found in the cytoplasm. The enzyme catalyses 3-methyl-2-oxobutanoate + (6R)-5,10-methylene-5,6,7,8-tetrahydrofolate + H2O = 2-dehydropantoate + (6S)-5,6,7,8-tetrahydrofolate. Its pathway is cofactor biosynthesis; (R)-pantothenate biosynthesis; (R)-pantoate from 3-methyl-2-oxobutanoate: step 1/2. Catalyzes the reversible reaction in which hydroxymethyl group from 5,10-methylenetetrahydrofolate is transferred onto alpha-ketoisovalerate to form ketopantoate. The protein is 3-methyl-2-oxobutanoate hydroxymethyltransferase of Thermotoga maritima (strain ATCC 43589 / DSM 3109 / JCM 10099 / NBRC 100826 / MSB8).